The sequence spans 643 residues: E3 ubiquitin-protein ligase AMFR (643 aa).

The next 6 helical transmembrane spans lie at 82–102 (LFVW…AKLI), 122–142 (FWNF…VQTV), 186–206 (VLSL…VCCV), 215–235 (TLAF…HVIL), 254–274 (GTYV…LDLM), and 276–296 (HIHM…VIFM). The segment at 341–379 (CAICWDSMQAARKLPCGHLFHNSCLRSWLEQDTSCPTCR) adopts an RING-type zinc-finger fold. A helical transmembrane segment spans residues 429–449 (IASWLPSFSVEVMHTTNILGI). The CUE domain maps to 456 to 498 (QLNAMAHQIQEMFPQVPYHLVLQDLQMTRSVEITTDNILEGRI). The interval 504–535 (TQRSDSLRPALNSPVERPSPDLEEGEASVQTE) is disordered. A phosphoserine mark is found at S516 and S542. Positions 598 to 624 (LNKSSEDDGASERLLPSEGTSSDPVTL) are disordered. A VCP/p97-interacting motif (VIM) region spans residues 622–640 (VTLRRRMLAAAAERRLQRQ).

As to quaternary structure, interacts with RNF5. Also forms an ERAD complex containing VCP/p97, NGLY1; PSMC1; SAKS1 and RAD23B required for coupling retrotranslocation, ubiquitination and deglycosylation. Interacts with DERL1. Interacts (through a region distinct from the RING finger) with UBE2G2/UBC7. Component of the VCP/p97-AMFR/gp78 complex that enhances VCP/p97 binding to polyubiquitinated proteins for their degradation by the endoplasmic reticulum-associated degradation (ERAD) pathway. Interacts (via the VIM) with VCP/p97. Interacts (via its membrane domain) with INSIG1; the interaction initiates the sterol-mediated ubiquitination and degradation of HMGCR by the ERAD pathway. Interacts with AUP1, UBE2G2 and RNF139/TRC8; interaction with AUP1 facilitates interaction of AMFR with ubiquitin-conjugating enzyme UBE2G2 and ubiquitin ligase RNF139, leading to sterol-induced ubiquitination of HNGCR and its subsequent proteasomal degradation. Interacts with BAG6. Interacts with USP13 (via UBA 2 domain); the interaction is direct. Interacts with LMBR1L, UBAC2 and CTNNB1. Interacts with C18orf32. In terms of processing, palmitoylation of the RING-type zing finger by ZDHHC6 promotes localization to the peripheral endoplasmic reticulum. Expressed in heart, brain, liver, lung, skeletal muscle, kidney and testis. Not detected in spleen.

The protein resides in the endoplasmic reticulum membrane. The enzyme catalyses [E2 ubiquitin-conjugating enzyme]-S-ubiquitinyl-L-cysteine + [acceptor protein]-L-cysteine = [E2 ubiquitin-conjugating enzyme]-L-cysteine + [acceptor protein]-S-ubiquitinyl-L-cysteine.. It participates in protein modification; protein ubiquitination. E3 ubiquitin-protein ligase that mediates the polyubiquitination of lysine and cysteine residues on target proteins, such as CD3D, CYP3A4, CFTR, INSIG1, SOAT2/ACAT2 and APOB for proteasomal degradation. Component of a VCP/p97-AMFR/gp78 complex that participates in the final step of endoplasmic reticulum-associated degradation (ERAD). The VCP/p97-AMFR/gp78 complex is involved in the sterol-accelerated ERAD degradation of HMGCR through binding to the HMGCR-INSIG1 complex at the ER membrane. In addition, interaction of AMFR with AUP1 facilitates interaction of AMFR with ubiquitin-conjugating enzyme UBE2G2 and ubiquitin ligase RNF139, leading to sterol-induced HMGCR ubiquitination. The ubiquitinated HMGCR is then released from the ER by the complex into the cytosol for subsequent destruction. In addition to ubiquitination on lysine residues, catalyzes ubiquitination on cysteine residues: together with INSIG1, mediates polyubiquitination of SOAT2/ACAT2 at 'Cys-277', leading to its degradation when the lipid levels are low. Catalyzes ubiquitination and subsequent degradation of INSIG1 when cells are depleted of sterols. Mediates polyubiquitination of INSIG2 at 'Cys-215' in some tissues, leading to its degradation. Also regulates ERAD through the ubiquitination of UBL4A a component of the BAG6/BAT3 complex. Also acts as a scaffold protein to assemble a complex that couples ubiquitination, retranslocation and deglycosylation. Mediates tumor invasion and metastasis as a receptor for the GPI/autocrine motility factor. In association with LMBR1L and UBAC2, negatively regulates the canonical Wnt signaling pathway in the lymphocytes by promoting the ubiquitin-mediated degradation of CTNNB1 and Wnt receptors FZD6 and LRP6. Regulates NF-kappa-B and MAPK signaling pathways by mediating 'Lys-27'-linked polyubiquitination of TAB3 and promoting subsequent TAK1/MAP3K7 activation. This Mus musculus (Mouse) protein is E3 ubiquitin-protein ligase AMFR (Amfr).